Reading from the N-terminus, the 176-residue chain is Nutrient stress-induced DNA-binding protein (176 aa).

Belongs to the Dps family. In terms of assembly, hexamer.

Its function is as follows. Involved in protection of chromosomal DNA from damage under nutrient-limited and oxidative stress conditions. Binds heme. The chain is Nutrient stress-induced DNA-binding protein (dpsA) from Synechococcus sp. (strain ATCC 27144 / PCC 6301 / SAUG 1402/1) (Anacystis nidulans).